The primary structure comprises 952 residues: Protein translocase subunit SecA (952 aa).

ATP is bound by residues glutamine 135, 153-157 (GEGKT), and aspartate 575. Low complexity predominate over residues 907 to 921 (AAPAAAIPGVSAKAA). The disordered stretch occupies residues 907 to 946 (AAPAAAIPGVSAKAATQSTTPAAKEIGRNDPCPCGSGKKY). The Zn(2+) site is built by cysteine 938, cysteine 940, cysteine 949, and cysteine 950.

Belongs to the SecA family. In terms of assembly, monomer and homodimer. Part of the essential Sec protein translocation apparatus which comprises SecA, SecYEG and auxiliary proteins SecDF. Other proteins may also be involved. Requires Zn(2+) as cofactor.

The protein resides in the cell membrane. It is found in the cytoplasm. It carries out the reaction ATP + H2O + cellular proteinSide 1 = ADP + phosphate + cellular proteinSide 2.. Part of the Sec protein translocase complex. Interacts with the SecYEG preprotein conducting channel. Has a central role in coupling the hydrolysis of ATP to the transfer of proteins into and across the cell membrane, serving as an ATP-driven molecular motor driving the stepwise translocation of polypeptide chains across the membrane. The sequence is that of Protein translocase subunit SecA from Dehalococcoides mccartyi (strain CBDB1).